Here is a 1210-residue protein sequence, read N- to C-terminus: Microtubule-associated tumor suppressor 1 homolog (1210 aa).

5 disordered regions span residues 1 to 21 (MNDDNSDRTEDGSRYVFIRDK), 370 to 404 (DPHIDSHDNDSDIQSSTEELTLRSVSGQRGSPYEM), 446 to 482 (VENGPRDAKRAPNLKGEPTNMPKPNLGKSATKTNTTV), 513 to 545 (QPKDTSIMKDTPSPQVTGGSSPSPGPSKHLTMM), and 585 to 618 (HSKNASLGVPRTTSATKSNQENVDKTGSPHAGSE). Residues 370–379 (DPHIDSHDND) show a composition bias toward basic and acidic residues. 3 positions are modified to phosphoserine: S375, S380, and S393. Positions 381-398 (DIQSSTEELTLRSVSGQR) are enriched in polar residues. Positions 446–455 (VENGPRDAKR) are enriched in basic and acidic residues. The span at 473 to 482 (KSATKTNTTV) shows a compositional bias: polar residues. A compositionally biased stretch (low complexity) spans 524–534 (PSPQVTGGSSP). Over residues 585 to 605 (HSKNASLGVPRTTSATKSNQE) the composition is skewed to polar residues. S621 is subject to Phosphoserine. Positions 683–771 (SKSLLVGSAP…YEEKPPKQAF (89 aa)) are disordered. Residues 692 to 702 (PKTSTTPGRSS) are compositionally biased toward polar residues. Residues 876-1171 (IQHLLSEREE…RLSMENEELL (296 aa)) are a coiled coil. Phosphoserine occurs at positions 1143, 1164, 1185, 1195, 1199, 1201, 1203, 1204, and 1208. The interval 1177-1210 (GDLCSPKRSPTSSAIPFQSPRNSGSFSSPSISPR) is disordered. Residues 1195-1210 (SPRNSGSFSSPSISPR) show a composition bias toward low complexity.

Belongs to the MTUS1 family. Homodimer. Interacts with AGTR2. Interacts with PTPN6. As to expression, ubiquitously expressed, with highest levels in uterus and adrenal gland.

Its subcellular location is the mitochondrion. It localises to the golgi apparatus. The protein localises to the cell membrane. It is found in the nucleus. Its function is as follows. Cooperates with AGTR2 to inhibit ERK2 activation and cell proliferation. May be required for AGTR2 cell surface expression. Together with PTPN6, induces UBE2V2 expression upon angiotensin-II stimulation. This chain is Microtubule-associated tumor suppressor 1 homolog (Mtus1), found in Mus musculus (Mouse).